Here is a 118-residue protein sequence, read N- to C-terminus: Beta-2-microglobulin (118 aa).

The signal sequence occupies residues methionine 1–alanine 21. The 88-residue stretch at proline 26–lysine 113 folds into the Ig-like C1-type domain. Cysteine 46 and cysteine 101 form a disulfide bridge.

The protein belongs to the beta-2-microglobulin family. In terms of assembly, heterodimer of an alpha chain and a beta chain. Beta-2-microglobulin is the beta-chain of major histocompatibility complex class I molecules.

Its subcellular location is the secreted. In terms of biological role, component of the class I major histocompatibility complex (MHC). Involved in the presentation of peptide antigens to the immune system. The chain is Beta-2-microglobulin (B2M) from Tachyglossus aculeatus aculeatus (Southeast Australian short-beaked echidna).